We begin with the raw amino-acid sequence, 513 residues long: Na(+)/H(+) antiporter NhaB (513 aa).

Transmembrane regions (helical) follow at residues 23–43 (LALI…PFVA), 52–72 (IFTL…LLAI), 97–117 (LLLM…LFIF), 120–140 (LLLS…AAAF), 144–164 (FLDA…FYGI), 202–222 (LMMH…VGEP), 238–258 (FFLR…LTCL), 303–323 (AIIG…VGLI), 348–368 (TESL…AVII), 391–411 (LFYI…VGTI), 447–467 (ATPN…APLI), and 475–495 (VWMA…CVEF).

It belongs to the NhaB Na(+)/H(+) (TC 2.A.34) antiporter family.

Its subcellular location is the cell inner membrane. The enzyme catalyses 2 Na(+)(in) + 3 H(+)(out) = 2 Na(+)(out) + 3 H(+)(in). Na(+)/H(+) antiporter that extrudes sodium in exchange for external protons. This chain is Na(+)/H(+) antiporter NhaB, found in Escherichia coli (strain 55989 / EAEC).